Consider the following 266-residue polypeptide: Type III pantothenate kinase (266 aa).

6 to 13 contributes to the ATP binding site; the sequence is DIGNSRIK. Substrate is bound by residues Y94 and 101–104; that span reads GIDR. Catalysis depends on D103, which acts as the Proton acceptor. K(+) is bound at residue D128. T131 provides a ligand contact to ATP. Position 183 (T183) interacts with substrate.

This sequence belongs to the type III pantothenate kinase family. Homodimer. NH4(+) serves as cofactor. K(+) is required as a cofactor.

It localises to the cytoplasm. The catalysed reaction is (R)-pantothenate + ATP = (R)-4'-phosphopantothenate + ADP + H(+). Its pathway is cofactor biosynthesis; coenzyme A biosynthesis; CoA from (R)-pantothenate: step 1/5. Its function is as follows. Catalyzes the phosphorylation of pantothenate (Pan), the first step in CoA biosynthesis. This Nitrosococcus oceani (strain ATCC 19707 / BCRC 17464 / JCM 30415 / NCIMB 11848 / C-107) protein is Type III pantothenate kinase.